Here is a 217-residue protein sequence, read N- to C-terminus: Peroxiredoxin (217 aa).

The Thioredoxin domain occupies 2–159 (AVIGEKFPDV…VVRLVKALQT (158 aa)). The active-site Cysteine sulfenic acid (-SOH) intermediate is the cysteine 46. Arginine 122 is a binding site for substrate.

It belongs to the peroxiredoxin family. Prx6 subfamily. In terms of assembly, homodecamer. Pentamer of dimers that assemble into a ring structure.

It is found in the cytoplasm. The catalysed reaction is a hydroperoxide + [thioredoxin]-dithiol = an alcohol + [thioredoxin]-disulfide + H2O. In terms of biological role, thiol-specific peroxidase that catalyzes the reduction of hydrogen peroxide and organic hydroperoxides to water and alcohols, respectively. Plays a role in cell protection against oxidative stress by detoxifying peroxides. In Methanococcus vannielii (strain ATCC 35089 / DSM 1224 / JCM 13029 / OCM 148 / SB), this protein is Peroxiredoxin.